Here is a 379-residue protein sequence, read N- to C-terminus: Oxysterol-binding protein-related protein 4C (379 aa).

This sequence belongs to the OSBP family. As to expression, expressed in flowers.

In terms of biological role, may be involved in the transport of sterols. This is Oxysterol-binding protein-related protein 4C (ORP4C) from Arabidopsis thaliana (Mouse-ear cress).